A 549-amino-acid polypeptide reads, in one-letter code: Solute carrier family 22 member 6 (549 aa).

The Cytoplasmic segment spans residues 1 to 23 (MAFNDLLLQLGGVGRFQKIQVTL). Residues 24-44 (VILPLILLASHNTLQNFTAAI) form a helical membrane-spanning segment. Residues 45–135 (PTHHCRPPAD…LVCSHRALRQ (91 aa)) are Extracellular-facing. Asparagine 56, asparagine 92, and asparagine 113 each carry an N-linked (GlcNAc...) asparagine glycan. The chain crosses the membrane as a helical span at residues 136–156 (LAQSLYMMGVLLGAMTFGCLA). The Cytoplasmic segment spans residues 157–164 (DRLGRRKV). The helical transmembrane segment at 165–185 (LIFNYLQTAVSGTCAAFAPNF) threads the bilayer. The Extracellular portion of the chain corresponds to 186 to 195 (PAYCAFRFLS). The helical transmembrane segment at 196-216 (GMSTAGVVLNCMTLNVEWMPI) threads the bilayer. Over 217–224 (HTRAYVGT) the chain is Cytoplasmic. The chain crosses the membrane as a helical span at residues 225-245 (LTGYVYSLGQFLLAGMAYAVP). Topologically, residues 246 to 248 (HWR) are extracellular. A helical transmembrane segment spans residues 249–269 (YLQLLVSAPFFAFFIYSWFFI). The Cytoplasmic segment spans residues 270-337 (ESARWYASSG…ELIRCPALRR (68 aa)). The chain crosses the membrane as a helical span at residues 338–358 (LFLCLSMLWFATSFAYYGLVM). Residues 359–368 (DLQGFGVSIY) lie on the Extracellular side of the membrane. The helical transmembrane segment at 369–389 (LIQVIFGAVDLPAKLVSFLVI) threads the bilayer. Over 390–395 (NNVGRR) the chain is Cytoplasmic. The chain crosses the membrane as a helical span at residues 396–416 (PAQMASLLLAGICILINGVVP). Residues 417 to 425 (KDKSIVRTS) lie on the Extracellular side of the membrane. A helical transmembrane segment spans residues 426-446 (LAVLGKGCLASSFNCIFLYTG). The Cytoplasmic portion of the chain corresponds to 447 to 456 (EVYPTMIRQT). A helical transmembrane segment spans residues 457–477 (GLGMGSTLARVGSIVSPLVSM). Topologically, residues 478–484 (TAELYPS) are extracellular. The helical transmembrane segment at 485–505 (VPLFIYGAVPVAASAAIALLP) threads the bilayer. Residues 506-549 (ETLGQPLPDTVQDVENRRRGKTRKQQEELQKQMVPLQASAQVKN) lie on the Cytoplasmic side of the membrane. The disordered stretch occupies residues 521 to 549 (NRRRGKTRKQQEELQKQMVPLQASAQVKN).

This sequence belongs to the major facilitator (TC 2.A.1) superfamily. Organic cation transporter (TC 2.A.1.19) family. Glycosylated. Glycosylation is necessary for proper targeting of the transporter to the plasma membrane.

Its subcellular location is the basolateral cell membrane. The protein localises to the basal cell membrane. It carries out the reaction (6R)-L-erythro-5,6,7,8-tetrahydrobiopterin(out) + a dicarboxylate(in) = (6R)-L-erythro-5,6,7,8-tetrahydrobiopterin(in) + a dicarboxylate(out). The enzyme catalyses L-erythro-7,8-dihydrobiopterin(out) + a dicarboxylate(in) = L-erythro-7,8-dihydrobiopterin(in) + a dicarboxylate(out). It catalyses the reaction L-sepiapterin(out) + a dicarboxylate(in) = L-sepiapterin(in) + a dicarboxylate(out). The catalysed reaction is prostaglandin F2alpha(out) + a dicarboxylate(in) = prostaglandin F2alpha(in) + a dicarboxylate(out). It carries out the reaction prostaglandin E2(out) + a dicarboxylate(in) = prostaglandin E2(in) + a dicarboxylate(out). The enzyme catalyses 3',5'-cyclic AMP(out) + a dicarboxylate(in) = 3',5'-cyclic AMP(in) + a dicarboxylate(out). It catalyses the reaction 3',5'-cyclic GMP(out) + a dicarboxylate(in) = 3',5'-cyclic GMP(in) + a dicarboxylate(out). The catalysed reaction is urate(out) + a dicarboxylate(in) = urate(in) + a dicarboxylate(out). It carries out the reaction kynurenate(out) + glutarate(in) = kynurenate(in) + glutarate(out). The enzyme catalyses (indol-3-yl)acetate(out) + a dicarboxylate(in) = (indol-3-yl)acetate(in) + a dicarboxylate(out). It catalyses the reaction indoxyl sulfate(out) + a dicarboxylate(in) = indoxyl sulfate(in) + a dicarboxylate(out). The catalysed reaction is N-benzoylglycine(out) + a dicarboxylate(in) = N-benzoylglycine(in) + a dicarboxylate(out). It carries out the reaction 3-carboxy-4-methyl-5-propyl-2-furanpropanoate(out) + a dicarboxylate(in) = 3-carboxy-4-methyl-5-propyl-2-furanpropanoate(in) + a dicarboxylate(out). In terms of biological role, secondary active transporter that functions as a Na(+)-independent organic anion (OA)/dicarboxylate antiporter where the uptake of one molecule of OA into the cell is coupled with an efflux of one molecule of intracellular dicarboxylate such as 2-oxoglutarate or glutarate. Mediates the uptake of OA across the basolateral side of proximal tubule epithelial cells, thereby contributing to the renal elimination of endogenous OA from the systemic circulation into the urine. Functions as a biopterin transporters involved in the uptake and the secretion of coenzymes tetrahydrobiopterin (BH4), dihydrobiopterin (BH2) and sepiapterin to urine, thereby determining baseline levels of blood biopterins. Transports prostaglandin E2 (PGE2) and prostaglandin F2-alpha (PGF2-alpha) and may contribute to their renal excretion. Also mediates the uptake of cyclic nucleotides such as cAMP and cGMP. Involved in the transport of neuroactive tryptophan metabolites kynurenate (KYNA) and xanthurenate (XA) and may contribute to their secretion from the brain. May transport glutamate. Also involved in the disposition of uremic toxins and potentially toxic xenobiotics by the renal organic anion secretory pathway, helping reduce their undesired toxicological effects on the body. Uremic toxins include the indoxyl sulfate (IS), hippurate/N-benzoylglycine (HA), indole acetate (IA), 3-carboxy-4- methyl-5-propyl-2-furanpropionate (CMPF) and urate. Xenobiotics include the mycotoxin ochratoxin (OTA). May also contribute to the transport of organic compounds in testes across the blood-testis-barrier. The chain is Solute carrier family 22 member 6 from Bos taurus (Bovine).